The chain runs to 322 residues: Methionyl-tRNA formyltransferase (322 aa).

112–115 is a (6S)-5,6,7,8-tetrahydrofolate binding site; the sequence is SLLP.

It belongs to the Fmt family.

The enzyme catalyses L-methionyl-tRNA(fMet) + (6R)-10-formyltetrahydrofolate = N-formyl-L-methionyl-tRNA(fMet) + (6S)-5,6,7,8-tetrahydrofolate + H(+). Its function is as follows. Attaches a formyl group to the free amino group of methionyl-tRNA(fMet). The formyl group appears to play a dual role in the initiator identity of N-formylmethionyl-tRNA by promoting its recognition by IF2 and preventing the misappropriation of this tRNA by the elongation apparatus. This Synechococcus sp. (strain JA-3-3Ab) (Cyanobacteria bacterium Yellowstone A-Prime) protein is Methionyl-tRNA formyltransferase.